We begin with the raw amino-acid sequence, 98 residues long: Large ribosomal subunit protein uL23 (98 aa).

This sequence belongs to the universal ribosomal protein uL23 family. Part of the 50S ribosomal subunit. Contacts protein L29, and trigger factor when it is bound to the ribosome.

Its function is as follows. One of the early assembly proteins it binds 23S rRNA. One of the proteins that surrounds the polypeptide exit tunnel on the outside of the ribosome. Forms the main docking site for trigger factor binding to the ribosome. In Frankia alni (strain DSM 45986 / CECT 9034 / ACN14a), this protein is Large ribosomal subunit protein uL23.